We begin with the raw amino-acid sequence, 72 residues long: Male-specific sperm protein Mst84Dd (72 aa).

Belongs to the MST(3)CGP family. Testis.

The chain is Male-specific sperm protein Mst84Dd (Mst84Dd) from Drosophila melanogaster (Fruit fly).